Here is a 653-residue protein sequence, read N- to C-terminus: Exocyst complex component 7 (653 aa).

An SEC8 and ARHQ binding region spans residues 1–384; it reads MIPPQEASAR…TKNKLPGLIT (384 aa). Coiled coils occupy residues 5–42 and 63–85; these read QEASARRREIEDKLKQEEETLSFIRDSLEKSDQLTKNM and VHKQTENLQRLQENVEKTLSCLD. Phosphoserine is present on serine 133. Residues 238–272 form a disordered region; the sequence is FRKSSSSSGVPYSPAIPNKRKDTPTKKPIKRPGRD.

Belongs to the EXO70 family. In terms of assembly, the exocyst complex is composed of EXOC1, EXOC2, EXOC3, EXOC4, EXOC5, EXOC6, EXOC7 and EXOC8. Interacts with ARHQ in a GTP-dependent manner. Interacts with RAB11FIP3.

The protein resides in the cytoplasm. Its subcellular location is the cytosol. It is found in the cell membrane. The protein localises to the midbody. It localises to the midbody ring. In terms of biological role, component of the exocyst complex involved in the docking of exocytic vesicles with fusion sites on the plasma membrane. In adipocytes, plays a crucial role in targeting SLC2A4 vesicle to the plasma membrane in response to insulin, perhaps directing the vesicle to the precise site of fusion. It is required for neuron survival and plays an essential role in cortical development. The polypeptide is Exocyst complex component 7 (Exoc7) (Rattus norvegicus (Rat)).